Reading from the N-terminus, the 960-residue chain is MERLSSIDAQLRMLVPGKVSEDDKLIEYDALLLDRFLDILQDLHGDDLKEMVQECYEVAAEYETKHDLQKLDELGKMITSLDPGDSIVIAKSFSHMLNLANLAEEVQIAYRRRIKLKKGDFADENSAITESDIEETLKRLVVDLKKSPAEVFDALKSQTVDLVLTAHPTQSVRRSLLQKHSRIRNCLVQLYSKDITPDDKQELDEALQREIQAAFRTDEIRRTQPTPQDEMRAGMSYFHETIWKGVPKFLRRVDTALKNIGINERVPYNAPLIQFSSWMGGDRDGNPRVTPEVTRDVCLLARMMASNLYCSQIEDLMFELSMWRCSDELRMRADELHRSTKKDAKHYIEFWKKVPPNEPYRVILSDVRDKLYNTRERSRELLSSGHSDIPEEATLTTVEQLLEPLELCYRSLCACGDRVIADGSLLDFLRQVSTFGLSLVRLDIRQESDRHTDVLDAITTYLGIGSYREWPEERRQEWLLSELNGKRPLFGPDLPKTEEIADVLDTFHVIAELPADNFGAYIISMATAPSDVLAVELLQRECHVKTPLRVVPLFEKLADLEAAPAALARLFSIDWYRQRINGKQEVMIGYSDSGKDAGRLSAAWQLYKAQEELIKVAKDFGVKLTMFHGRGGTVGRGGGPTHLAILSQPPDTIHGSLRVTVQGEVIEQSFGEEHLSFRTLQRFTAATLEHGMHPPNAPKPEWRTLLDEMAVVATEEYRSIVFQEPRFVEYFRLATPETEYGRMNIGSRPSKRKPSGGIESLRAIPWIFAWTQTRFHLPVWLGFGGAFKHVLQKDIRNLHMLQEMYNEWPFFRVTIDLVEMVFAKGNPGIAALYDKLLVSEELRPLGEKLRANYEETQKLLLQVAGHRDLLEGDPYLKQRLRLRDAYITTLNVCQAYTLKRIRDPDYHVALRPHLSKEIMDPTKAASELVKLNPGSEYAPGLEDTLILTMKGIAAGLQNTG.

Residues His167 and Lys595 contribute to the active site.

This sequence belongs to the PEPCase type 1 family. In terms of assembly, homotetramer. The cofactor is Mg(2+).

It localises to the cytoplasm. The enzyme catalyses oxaloacetate + phosphate = phosphoenolpyruvate + hydrogencarbonate. It participates in photosynthesis; C3 acid pathway. In terms of biological role, through the carboxylation of phosphoenolpyruvate (PEP) it forms oxaloacetate, a four-carbon dicarboxylic acid source for the tricarboxylic acid cycle. This chain is Phosphoenolpyruvate carboxylase 2, found in Sorghum bicolor (Sorghum).